The primary structure comprises 493 residues: Alginate production protein AlgE (493 aa).

Positions 1 to 25 (MKLNPLMAAGMGLGFTLFWACPTLA) are cleaved as a signal peptide. The segment covering 93–111 (DPLEQSNSDGSGTQTSRGT) has biased composition (polar residues). Positions 93–115 (DPLEQSNSDGSGTQTSRGTASER) are disordered.

The protein belongs to the AlgE family.

Its subcellular location is the cell outer membrane. It participates in glycan biosynthesis; alginate biosynthesis. In terms of biological role, has non-porin-like, channel-forming properties and probably functions as an alginate permeability pore. The protein is Alginate production protein AlgE (algE) of Pseudomonas syringae pv. tomato (strain ATCC BAA-871 / DC3000).